We begin with the raw amino-acid sequence, 295 residues long: Zygote arrest protein 1.S (295 aa).

Disordered stretches follow at residues 80-115 (SVQCSLGPRTLLRRRPGALRKPPPEQGSPASPTKTV) and 144-186 (EKGE…APAQ). Residues 144–176 (EKGEAVRSEGSEGGRQEGKQGDGEIKEQMKMDK) are compositionally biased toward basic and acidic residues. Residues 197 to 280 (KYGYYHCKDC…RQDLCGRCKG (84 aa)) form a 3CxxC-type zinc finger.

This sequence belongs to the ZAR1 family. As to expression, ovary. Also expressed in lung and muscle.

The protein resides in the cytoplasm. It is found in the cytoplasmic ribonucleoprotein granule. MRNA-binding protein required for maternal mRNA storage, translation and degradation during oocyte maturation. Probably promotes formation of some phase-separated membraneless compartment that stores maternal mRNAs in oocytes: acts by undergoing liquid-liquid phase separation upon binding to maternal mRNAs. Binds to the 3'-UTR of maternal mRNAs in immature oocytes, inhibiting their translation. The sequence is that of Zygote arrest protein 1.S (zar1.S) from Xenopus laevis (African clawed frog).